Here is a 129-residue protein sequence, read N- to C-terminus: Small ribosomal subunit protein uS11 (129 aa).

Belongs to the universal ribosomal protein uS11 family. Part of the 30S ribosomal subunit. Interacts with proteins S7 and S18. Binds to IF-3.

Its function is as follows. Located on the platform of the 30S subunit, it bridges several disparate RNA helices of the 16S rRNA. Forms part of the Shine-Dalgarno cleft in the 70S ribosome. This is Small ribosomal subunit protein uS11 from Brucella abortus (strain S19).